We begin with the raw amino-acid sequence, 420 residues long: Tyrosine--tRNA ligase (420 aa).

Y33 lines the L-tyrosine pocket. The 'HIGH' region motif lies at 38-47; sequence PTADSLHIGH. L-tyrosine contacts are provided by Y168 and Q172. The 'KMSKS' region motif lies at 231–235; it reads KFGKT. K234 contacts ATP. One can recognise an S4 RNA-binding domain in the interval 353 to 419; it reads MLLVDALIKV…GKKNYYLVKL (67 aa).

It belongs to the class-I aminoacyl-tRNA synthetase family. TyrS type 1 subfamily. Homodimer.

The protein resides in the cytoplasm. It catalyses the reaction tRNA(Tyr) + L-tyrosine + ATP = L-tyrosyl-tRNA(Tyr) + AMP + diphosphate + H(+). Functionally, catalyzes the attachment of tyrosine to tRNA(Tyr) in a two-step reaction: tyrosine is first activated by ATP to form Tyr-AMP and then transferred to the acceptor end of tRNA(Tyr). The chain is Tyrosine--tRNA ligase from Desulfitobacterium hafniense (strain Y51).